Consider the following 224-residue polypeptide: EEF1A lysine methyltransferase 3 (224 aa).

Residues Trp-58, 84–86 (GAG), Asp-105, Trp-134, and Ala-151 contribute to the S-adenosyl-L-methionine site.

This sequence belongs to the methyltransferase superfamily. METTL21 family.

Its subcellular location is the cytoplasm. The protein localises to the cytoskeleton. It localises to the microtubule organizing center. It is found in the centrosome. The enzyme catalyses L-lysyl-[protein] + 3 S-adenosyl-L-methionine = N(6),N(6),N(6)-trimethyl-L-lysyl-[protein] + 3 S-adenosyl-L-homocysteine + 3 H(+). It catalyses the reaction L-lysyl-[protein] + S-adenosyl-L-methionine = N(6)-methyl-L-lysyl-[protein] + S-adenosyl-L-homocysteine + H(+). The catalysed reaction is N(6)-methyl-L-lysyl-[protein] + S-adenosyl-L-methionine = N(6),N(6)-dimethyl-L-lysyl-[protein] + S-adenosyl-L-homocysteine + H(+). It carries out the reaction N(6),N(6)-dimethyl-L-lysyl-[protein] + S-adenosyl-L-methionine = N(6),N(6),N(6)-trimethyl-L-lysyl-[protein] + S-adenosyl-L-homocysteine + H(+). In terms of biological role, protein-lysine methyltransferase that selectively mono-, di- and trimethylates 'Lys-165' of the translation elongation factors EEF1A1 and EEF1A2 in an aminoacyl-tRNA and GTP-dependent manner. EEF1A1 methylation by EEF1AKMT3 is dynamic as well as inducible by stress conditions, such as ER-stress, and plays a regulatory role on mRNA translation. In Xenopus tropicalis (Western clawed frog), this protein is EEF1A lysine methyltransferase 3.